The chain runs to 827 residues: Centrosomal protein of 95 kDa (827 aa).

5 disordered regions span residues 115 to 145 (ISESSPNKSETEQYSKDSHGEEAGEDLERTE), 183 to 249 (GDTA…MVPS), 308 to 372 (FLTS…MSEK), 388 to 476 (LGDR…DSCH), and 489 to 558 (ELRK…KASP). The span at 123-145 (SETEQYSKDSHGEEAGEDLERTE) shows a compositional bias: basic and acidic residues. Residues 187-199 (HTFSQRSNGAQNS) are compositionally biased toward polar residues. Composition is skewed to basic and acidic residues over residues 327–343 (EATRTRKPSKGERDENR) and 360–372 (PLTEQELHAMSEK). 3 positions are modified to phosphoserine: Ser447, Ser449, and Ser451. Coiled coils occupy residues 584 to 633 (LTKM…VKKE) and 701 to 795 (LQIQ…DDDA).

Its subcellular location is the cytoplasm. It localises to the cytoskeleton. The protein resides in the microtubule organizing center. The protein localises to the centrosome. It is found in the spindle pole. This is Centrosomal protein of 95 kDa (Cep95) from Mus musculus (Mouse).